The following is a 161-amino-acid chain: MQTIEQQIANVIEESLTDMGFELVLVKFKGVNPKVVEILIDSLNSEKISVEDCTKASRTISAILDVEDLIEAAYSLEVASSGLERPLVKFENYNRFLEREVKITLKELLNGKTRYQGKIIKAENNKIYLKCEEQEVLIDYDLIKNANLVLTEEVFKKLLKQ.

Belongs to the RimP family.

The protein localises to the cytoplasm. Its function is as follows. Required for maturation of 30S ribosomal subunits. The chain is Ribosome maturation factor RimP from Rickettsia africae (strain ESF-5).